A 188-amino-acid chain; its full sequence is Elongation factor P (188 aa).

Residue K34 is modified to N6-(3,6-diaminohexanoyl)-5-hydroxylysine.

The protein belongs to the elongation factor P family. In terms of processing, may be beta-lysylated on the epsilon-amino group of Lys-34 by the combined action of EpmA and EpmB, and then hydroxylated on the C5 position of the same residue by EpmC (if this protein is present). Lysylation is critical for the stimulatory effect of EF-P on peptide-bond formation. The lysylation moiety may extend toward the peptidyltransferase center and stabilize the terminal 3-CCA end of the tRNA. Hydroxylation of the C5 position on Lys-34 may allow additional potential stabilizing hydrogen-bond interactions with the P-tRNA.

It localises to the cytoplasm. It functions in the pathway protein biosynthesis; polypeptide chain elongation. Involved in peptide bond synthesis. Alleviates ribosome stalling that occurs when 3 or more consecutive Pro residues or the sequence PPG is present in a protein, possibly by augmenting the peptidyl transferase activity of the ribosome. Modification of Lys-34 is required for alleviation. This is Elongation factor P from Coxiella burnetii (strain CbuK_Q154) (Coxiella burnetii (strain Q154)).